The primary structure comprises 94 residues: Pyrimidine/purine nucleoside phosphorylase (94 aa).

Belongs to the nucleoside phosphorylase PpnP family.

The enzyme catalyses a purine D-ribonucleoside + phosphate = a purine nucleobase + alpha-D-ribose 1-phosphate. It carries out the reaction adenosine + phosphate = alpha-D-ribose 1-phosphate + adenine. It catalyses the reaction cytidine + phosphate = cytosine + alpha-D-ribose 1-phosphate. The catalysed reaction is guanosine + phosphate = alpha-D-ribose 1-phosphate + guanine. The enzyme catalyses inosine + phosphate = alpha-D-ribose 1-phosphate + hypoxanthine. It carries out the reaction thymidine + phosphate = 2-deoxy-alpha-D-ribose 1-phosphate + thymine. It catalyses the reaction uridine + phosphate = alpha-D-ribose 1-phosphate + uracil. The catalysed reaction is xanthosine + phosphate = alpha-D-ribose 1-phosphate + xanthine. Functionally, catalyzes the phosphorolysis of diverse nucleosides, yielding D-ribose 1-phosphate and the respective free bases. Can use uridine, adenosine, guanosine, cytidine, thymidine, inosine and xanthosine as substrates. Also catalyzes the reverse reactions. This is Pyrimidine/purine nucleoside phosphorylase from Alcanivorax borkumensis (strain ATCC 700651 / DSM 11573 / NCIMB 13689 / SK2).